Here is a 200-residue protein sequence, read N- to C-terminus: Guanylyl cyclase-activating protein 2 (200 aa).

Glycine 2 carries N-myristoyl glycine lipidation. 4 EF-hand domains span residues glycine 14–glutamate 31, glutamate 53–glycine 88, threonine 89–leucine 124, and threonine 141–valine 176. Ca(2+) is bound by residues aspartate 66, asparagine 68, aspartate 70, threonine 72, glutamate 77, aspartate 102, aspartate 104, asparagine 106, cysteine 108, glutamate 113, aspartate 154, asparagine 156, aspartate 158, glutamine 160, and glutamate 165.

In terms of processing, the N-terminus is blocked. As to expression, in the retina, it is expressed in cone and rod photoreceptor cells.

Its subcellular location is the cell membrane. The protein localises to the photoreceptor inner segment. It localises to the cell projection. The protein resides in the cilium. It is found in the photoreceptor outer segment. Its function is as follows. Stimulates two retinal guanylyl cyclases (GCs) GUCY2D and GUCY2F when free calcium ions concentration is low, and inhibits GUCY2D and GUCY2F when free calcium ions concentration is elevated. This Ca(2+)-sensitive regulation of GCs is a key event in recovery of the dark state of rod photoreceptors following light exposure. May be involved in cone photoreceptor response and recovery of response in bright light. This is Guanylyl cyclase-activating protein 2 (GUCA1B) from Homo sapiens (Human).